The sequence spans 77 residues: uncharacterized protein (77 aa).

Putative sugar-binding regulatory protein for the alpha-amylase gene. This is an uncharacterized protein from Streptomyces violaceus (Streptomyces venezuelae).